A 241-amino-acid chain; its full sequence is uncharacterized protein (241 aa).

Its subcellular location is the cytoplasm. The protein localises to the nucleus. This is an uncharacterized protein from Schizosaccharomyces pombe (strain 972 / ATCC 24843) (Fission yeast).